The sequence spans 151 residues: Ribosome maturation factor RimP (151 aa).

This sequence belongs to the RimP family.

It localises to the cytoplasm. Its function is as follows. Required for maturation of 30S ribosomal subunits. This is Ribosome maturation factor RimP from Endomicrobium trichonymphae.